Here is a 700-residue protein sequence, read N- to C-terminus: Centrosomal protein of 63 kDa (700 aa).

N-acetylmethionine is present on Met1. Coiled coils occupy residues 73 to 283 (KEVG…ETFI) and 343 to 533 (LQAE…MCKK). A phosphoserine mark is found at Ser278, Lys488, and Leu492. The segment at 570–603 (QYKTGHHSPRGQTLDSIDPVARGPSPLSSHISPG) is disordered. The span at 593–603 (PSPLSSHISPG) shows a compositional bias: low complexity.

The protein belongs to the CEP63 family. As to quaternary structure, interacts with CEP152 and CDK1; these interactions recruit both ligands to centrosomes. Interacts with CDK2, CDK5RAP2, WDR62, CEP90, KIAA0753/moonraker and CCDC14. CEP63, CDK5RAP2, CEP152, WDR62 are proposed to form a stepwise assembled complex at the centrosome forming a ring near parental centrioles. Interacts with CCDC57; the interaction is required for their location to proximal end of centrioles. Interacts with FXR1; promoting its stabilization. Post-translationally, polyubiquitinated via 'Lys-48'-linked ubiquitin, leading to its degradation. Deubiquitinated by USP36, promoting its stabilization.

The protein resides in the cytoplasm. It localises to the cytoskeleton. The protein localises to the microtubule organizing center. It is found in the centrosome. Its subcellular location is the centriole. The protein resides in the centriolar satellite. Required for normal spindle assembly. Plays a key role in mother-centriole-dependent centriole duplication; the function also seems to involve CEP152, CDK5RAP2 and WDR62 through a stepwise assembled complex at the centrosome that recruits CDK2 required for centriole duplication. Reported to be required for centrosomal recruitment of CEP152; however, this function has been questioned. Also recruits CDK1 to centrosomes. Plays a role in DNA damage response. Following DNA damage, such as double-strand breaks (DSBs), is removed from centrosomes; this leads to the inactivation of spindle assembly and delay in mitotic progression. Promotes stabilization of FXR1 protein by inhibiting FXR1 ubiquitination. This is Centrosomal protein of 63 kDa from Mus musculus (Mouse).